The primary structure comprises 147 residues: Phosphoribosyl-AMP cyclohydrolase (147 aa).

D91 is a binding site for Mg(2+). C92 serves as a coordination point for Zn(2+). D93 and D95 together coordinate Mg(2+). 2 residues coordinate Zn(2+): C108 and C115.

The protein belongs to the PRA-CH family. In terms of assembly, homodimer. Mg(2+) is required as a cofactor. The cofactor is Zn(2+).

The protein resides in the cytoplasm. It catalyses the reaction 1-(5-phospho-beta-D-ribosyl)-5'-AMP + H2O = 1-(5-phospho-beta-D-ribosyl)-5-[(5-phospho-beta-D-ribosylamino)methylideneamino]imidazole-4-carboxamide. It participates in amino-acid biosynthesis; L-histidine biosynthesis; L-histidine from 5-phospho-alpha-D-ribose 1-diphosphate: step 3/9. Functionally, catalyzes the hydrolysis of the adenine ring of phosphoribosyl-AMP. In Rhodopseudomonas palustris (strain BisB5), this protein is Phosphoribosyl-AMP cyclohydrolase.